The primary structure comprises 647 residues: UvrABC system protein C (647 aa).

Residues 26–106 (SEPGCYLMRD…IKEHQPYFNI (81 aa)) form the GIY-YIG domain. The region spanning 216-251 (DQLKDLLHKQMLIQSKLQEFEKAAIIRDQIKGIEQL) is the UVR domain.

It belongs to the UvrC family. Interacts with UvrB in an incision complex.

It is found in the cytoplasm. Functionally, the UvrABC repair system catalyzes the recognition and processing of DNA lesions. UvrC both incises the 5' and 3' sides of the lesion. The N-terminal half is responsible for the 3' incision and the C-terminal half is responsible for the 5' incision. The protein is UvrABC system protein C of Prochlorococcus marinus (strain MIT 9211).